A 310-amino-acid chain; its full sequence is Methionyl-tRNA formyltransferase (310 aa).

A (6S)-5,6,7,8-tetrahydrofolate-binding site is contributed by 109–112 (SLLP).

It belongs to the Fmt family.

The enzyme catalyses L-methionyl-tRNA(fMet) + (6R)-10-formyltetrahydrofolate = N-formyl-L-methionyl-tRNA(fMet) + (6S)-5,6,7,8-tetrahydrofolate + H(+). In terms of biological role, attaches a formyl group to the free amino group of methionyl-tRNA(fMet). The formyl group appears to play a dual role in the initiator identity of N-formylmethionyl-tRNA by promoting its recognition by IF2 and preventing the misappropriation of this tRNA by the elongation apparatus. The polypeptide is Methionyl-tRNA formyltransferase (Pseudomonas putida (strain ATCC 700007 / DSM 6899 / JCM 31910 / BCRC 17059 / LMG 24140 / F1)).